We begin with the raw amino-acid sequence, 361 residues long: Phospho-N-acetylmuramoyl-pentapeptide-transferase (361 aa).

10 helical membrane-spanning segments follow: residues 27–47 (GAFFTALIFGFIFGRPLINLL), 72–92 (TPTMGGLLILSALTLATLLWA), 98–118 (YVWLVLFVTVSFGLIGFMDDF), 135–155 (LAMGFGIAGIAGAGALLLHPE), 169–189 (TLINLSILFIPFCMIVIAGSA), 200–220 (GLAIMPVMIAAGTLGVIAYAV), 240–260 (IFVFTSALIGGGLGFLWYNAP), 263–283 (AVFMGDTGSLALGGALGAIAV), 289–309 (IVLVVVGGIFVVEALSVIIQV), and 338–358 (QIVIRFWIISLILALIGLATL).

This sequence belongs to the glycosyltransferase 4 family. MraY subfamily. It depends on Mg(2+) as a cofactor.

Its subcellular location is the cell inner membrane. It catalyses the reaction UDP-N-acetyl-alpha-D-muramoyl-L-alanyl-gamma-D-glutamyl-meso-2,6-diaminopimeloyl-D-alanyl-D-alanine + di-trans,octa-cis-undecaprenyl phosphate = di-trans,octa-cis-undecaprenyl diphospho-N-acetyl-alpha-D-muramoyl-L-alanyl-D-glutamyl-meso-2,6-diaminopimeloyl-D-alanyl-D-alanine + UMP. It participates in cell wall biogenesis; peptidoglycan biosynthesis. In terms of biological role, catalyzes the initial step of the lipid cycle reactions in the biosynthesis of the cell wall peptidoglycan: transfers peptidoglycan precursor phospho-MurNAc-pentapeptide from UDP-MurNAc-pentapeptide onto the lipid carrier undecaprenyl phosphate, yielding undecaprenyl-pyrophosphoryl-MurNAc-pentapeptide, known as lipid I. The chain is Phospho-N-acetylmuramoyl-pentapeptide-transferase from Dinoroseobacter shibae (strain DSM 16493 / NCIMB 14021 / DFL 12).